Reading from the N-terminus, the 358-residue chain is MATH domain and coiled-coil domain-containing protein At3g58440 (358 aa).

The MATH domain occupies 8–131 (QDKFTWVLEK…NDRLTIVAEV (124 aa)). Positions 250-309 (LRDAGFKVDWLEKKLDQLKEKKEEEMSGLARLHEIEERLQKLKLLFVDLESQLQKEKVEA) form a coiled coil.

This chain is MATH domain and coiled-coil domain-containing protein At3g58440, found in Arabidopsis thaliana (Mouse-ear cress).